Here is an 83-residue protein sequence, read N- to C-terminus: RNA-binding protein Hfq (83 aa).

Residues 11 to 71 form the Sm domain; it reads DTFLNHVRKN…ISTIMPGHPV (61 aa).

Belongs to the Hfq family. In terms of assembly, homohexamer.

RNA chaperone that binds small regulatory RNA (sRNAs) and mRNAs to facilitate mRNA translational regulation in response to envelope stress, environmental stress and changes in metabolite concentrations. Also binds with high specificity to tRNAs. This chain is RNA-binding protein Hfq, found in Methylobacterium radiotolerans (strain ATCC 27329 / DSM 1819 / JCM 2831 / NBRC 15690 / NCIMB 10815 / 0-1).